The primary structure comprises 600 residues: UvrABC system protein C (600 aa).

The region spanning E15–V92 is the GIY-YIG domain. The UVR domain maps to Q197–T232.

Belongs to the UvrC family. Interacts with UvrB in an incision complex.

It is found in the cytoplasm. Functionally, the UvrABC repair system catalyzes the recognition and processing of DNA lesions. UvrC both incises the 5' and 3' sides of the lesion. The N-terminal half is responsible for the 3' incision and the C-terminal half is responsible for the 5' incision. This chain is UvrABC system protein C, found in Lactobacillus delbrueckii subsp. bulgaricus (strain ATCC BAA-365 / Lb-18).